A 512-amino-acid polypeptide reads, in one-letter code: Maturase K (512 aa).

This sequence belongs to the intron maturase 2 family. MatK subfamily.

The protein localises to the plastid. Its subcellular location is the chloroplast. Its function is as follows. Usually encoded in the trnK tRNA gene intron. Probably assists in splicing its own and other chloroplast group II introns. This chain is Maturase K, found in Lemna minuta (Least duckweed).